Reading from the N-terminus, the 958-residue chain is Collagen alpha-1(I) chain (958 aa).

The interval Gly-1 to Pro-958 is disordered. The span at Asn-50–Glu-64 shows a compositional bias: basic and acidic residues. At Ser-92 the chain carries Phosphoserine. Composition is skewed to low complexity over residues Asp-100–Asn-116 and Pro-139–Ala-152. Residues Pro-154–Phe-166 are compositionally biased toward pro residues. A compositionally biased stretch (low complexity) spans Ala-216–Ser-232. Residues Gly-294–Gly-303 are compositionally biased toward gly residues. 8 stretches are compositionally biased toward low complexity: residues Phe-304–Ala-335, Lys-347–Arg-373, Ala-382–Pro-401, Ser-557–Ala-571, Ala-584–Ala-614, Ser-640–Val-656, Glu-685–Glu-694, and Ala-704–Ala-728. The residue at position 560 (Ser-560) is a Phosphoserine. Composition is skewed to pro residues over residues Pro-769–Ala-779 and Ala-808–Val-823. The segment covering Arg-859 to Ile-873 has biased composition (basic and acidic residues). Low complexity predominate over residues Pro-892–Pro-925. Positions Val-943 to Pro-958 are enriched in pro residues.

Belongs to the fibrillar collagen family. Trimers of one alpha 2(I) and two alpha 1(I) chains. In terms of processing, prolines at the third position of the tripeptide repeating unit (G-X-Y) are hydroxylated in some or all of the chains. As to expression, forms the fibrils of tendon, ligaments and bones. In bones, the fibrils are mineralized with calcium hydroxyapatite.

It is found in the secreted. The protein resides in the extracellular space. Its subcellular location is the extracellular matrix. In terms of biological role, type I collagen is a member of group I collagen (fibrillar forming collagen). In Macrauchenia sp, this protein is Collagen alpha-1(I) chain.